Here is a 101-residue protein sequence, read N- to C-terminus: Helix-loop-helix protein 17 (101 aa).

Residues 14 to 27 (GVRLSINLRERCRM) form a basic motif region. Positions 14–68 (GVRLSINLRERCRMHDLNEALDDLRAVIPYAHGGSVRKLSKIATLLLAKNHIIMQ) constitute a bHLH domain. The interval 28–68 (HDLNEALDDLRAVIPYAHGGSVRKLSKIATLLLAKNHIIMQ) is helix-loop-helix motif.

Expressed in neuronal tissues of the head, including sheath cells of the cephalic sensilla (CEPsh) glia.

It localises to the nucleus. Functionally, probable transcription factor that regulates the expression of dopamine receptors dop-1, dop-2 and dop-3 and thus dopamine-dependent behaviors. May act redundantly with hlh-31 and hlh-32 to regulate ventral CEPsh glia functions. May play a role in chemotactic responses in larvae. The protein is Helix-loop-helix protein 17 of Caenorhabditis elegans.